The sequence spans 253 residues: 5'-nucleotidase SurE (253 aa).

A divalent metal cation contacts are provided by Asp-8, Asp-9, Ser-40, and Asn-93.

The protein belongs to the SurE nucleotidase family. A divalent metal cation serves as cofactor.

The protein localises to the cytoplasm. The catalysed reaction is a ribonucleoside 5'-phosphate + H2O = a ribonucleoside + phosphate. Nucleotidase that shows phosphatase activity on nucleoside 5'-monophosphates. In Methylobacterium sp. (strain 4-46), this protein is 5'-nucleotidase SurE.